A 253-amino-acid chain; its full sequence is uncharacterized protein (253 aa).

S-adenosyl-L-methionine contacts are provided by residues Gly45, 66–67 (DA), 94–95 (AE), and Arg110.

This sequence belongs to the methyltransferase superfamily.

This is an uncharacterized protein from Bacillus subtilis (strain 168).